A 163-amino-acid polypeptide reads, in one-letter code: Lipoprotein signal peptidase (163 aa).

The next 3 membrane-spanning stretches (helical) occupy residues 11 to 31 (ILIAVFVVIFDQVTKYIIATT), 64 to 84 (MTFFFIITIIILIALVYFFIN), and 88 to 108 (YNLFMQVAISLLFAGALGNFI). Active-site residues include D118 and D136. Residues 131-151 (IFNIADSSLTIGVILIIIALL) traverse the membrane as a helical segment.

It belongs to the peptidase A8 family.

It localises to the cell membrane. It carries out the reaction Release of signal peptides from bacterial membrane prolipoproteins. Hydrolyzes -Xaa-Yaa-Zaa-|-(S,diacylglyceryl)Cys-, in which Xaa is hydrophobic (preferably Leu), and Yaa (Ala or Ser) and Zaa (Gly or Ala) have small, neutral side chains.. It participates in protein modification; lipoprotein biosynthesis (signal peptide cleavage). Its function is as follows. This protein specifically catalyzes the removal of signal peptides from prolipoproteins. This chain is Lipoprotein signal peptidase, found in Staphylococcus aureus (strain bovine RF122 / ET3-1).